Reading from the N-terminus, the 185-residue chain is Elongation factor P (185 aa).

This sequence belongs to the elongation factor P family.

The protein localises to the cytoplasm. Its pathway is protein biosynthesis; polypeptide chain elongation. Its function is as follows. Involved in peptide bond synthesis. Stimulates efficient translation and peptide-bond synthesis on native or reconstituted 70S ribosomes in vitro. Probably functions indirectly by altering the affinity of the ribosome for aminoacyl-tRNA, thus increasing their reactivity as acceptors for peptidyl transferase. The polypeptide is Elongation factor P (Bacillus cereus (strain G9842)).